The following is a 184-amino-acid chain: Inactive ribonuclease-like protein 9 (184 aa).

An N-terminal signal peptide occupies residues 1-25 (MKPLVIKFAWPLPLLLLLLLPPKLQ). 3 disulfide bridges follow: Cys93-Cys148, Cys111-Cys163, and Cys118-Cys125. Asn147 and Asn179 each carry an N-linked (GlcNAc...) asparagine glycan.

This sequence belongs to the pancreatic ribonuclease family.

Its subcellular location is the secreted. Functionally, does not exhibit any ribonuclease activity. In Mus musculus (Mouse), this protein is Inactive ribonuclease-like protein 9 (Rnase9).